Consider the following 83-residue polypeptide: Alpha-neurotoxin NTX-3 (83 aa).

The signal sequence occupies residues 1 to 21; it reads MKTLLLTLLVVTIVCLDLGYT. 4 disulfide bridges follow: Cys-24/Cys-45, Cys-38/Cys-62, Cys-64/Cys-75, and Cys-76/Cys-81.

The protein belongs to the three-finger toxin family. Short-chain subfamily. Type I alpha-neurotoxin sub-subfamily. As to expression, expressed by the venom gland.

It localises to the secreted. Its function is as follows. Binds to muscle nicotinic acetylcholine receptor (nAChR) and inhibit acetylcholine from binding to the receptor, thereby impairing neuromuscular transmission. This is Alpha-neurotoxin NTX-3 from Naja sputatrix (Malayan spitting cobra).